The following is a 202-amino-acid chain: Venom allergen 5.02 (202 aa).

4 disulfide bridges follow: cysteine 4–cysteine 16, cysteine 8–cysteine 101, cysteine 26–cysteine 94, and cysteine 168–cysteine 185. The region spanning lysine 46–tyrosine 187 is the SCP domain.

This sequence belongs to the CRISP family. Venom allergen 5-like subfamily. As to expression, expressed by the venom gland.

It localises to the secreted. The chain is Venom allergen 5.02 from Vespa crabro (European hornet).